Here is a 305-residue protein sequence, read N- to C-terminus: Glutaminase (305 aa).

7 residues coordinate substrate: Ser-61, Asn-113, Glu-158, Asn-165, Tyr-189, Tyr-241, and Val-259.

It belongs to the glutaminase family. In terms of assembly, homotetramer.

It carries out the reaction L-glutamine + H2O = L-glutamate + NH4(+). The protein is Glutaminase of Clostridium botulinum (strain Loch Maree / Type A3).